Reading from the N-terminus, the 199-residue chain is ATP-dependent Clp protease proteolytic subunit 2 (199 aa).

S98 (nucleophile) is an active-site residue. H123 is a catalytic residue.

This sequence belongs to the peptidase S14 family. Fourteen ClpP subunits assemble into 2 heptameric rings which stack back to back to give a disk-like structure with a central cavity, resembling the structure of eukaryotic proteasomes.

It localises to the cytoplasm. The enzyme catalyses Hydrolysis of proteins to small peptides in the presence of ATP and magnesium. alpha-casein is the usual test substrate. In the absence of ATP, only oligopeptides shorter than five residues are hydrolyzed (such as succinyl-Leu-Tyr-|-NHMec, and Leu-Tyr-Leu-|-Tyr-Trp, in which cleavage of the -Tyr-|-Leu- and -Tyr-|-Trp bonds also occurs).. In terms of biological role, cleaves peptides in various proteins in a process that requires ATP hydrolysis. Has a chymotrypsin-like activity. Plays a major role in the degradation of misfolded proteins. In Treponema pallidum (strain Nichols), this protein is ATP-dependent Clp protease proteolytic subunit 2.